The sequence spans 650 residues: Probable Xaa-Pro aminopeptidase P (650 aa).

Residues D447, D458, E556, and E570 each coordinate Mn(2+).

This sequence belongs to the peptidase M24B family. The cofactor is Mn(2+).

It carries out the reaction Release of any N-terminal amino acid, including proline, that is linked to proline, even from a dipeptide or tripeptide.. Its function is as follows. Catalyzes the removal of a penultimate prolyl residue from the N-termini of peptides. This chain is Probable Xaa-Pro aminopeptidase P (AMPP), found in Phaeosphaeria nodorum (strain SN15 / ATCC MYA-4574 / FGSC 10173) (Glume blotch fungus).